A 193-amino-acid polypeptide reads, in one-letter code: dCTP deaminase (193 aa).

Residues 110–115, Asp128, 136–138, Tyr171, Lys178, and Gln182 contribute to the dCTP site; these read RSSLAR and VLE. Glu138 serves as the catalytic Proton donor/acceptor.

This sequence belongs to the dCTP deaminase family. In terms of assembly, homotrimer.

The enzyme catalyses dCTP + H2O + H(+) = dUTP + NH4(+). Its pathway is pyrimidine metabolism; dUMP biosynthesis; dUMP from dCTP (dUTP route): step 1/2. In terms of biological role, catalyzes the deamination of dCTP to dUTP. In Buchnera aphidicola subsp. Acyrthosiphon pisum (strain APS) (Acyrthosiphon pisum symbiotic bacterium), this protein is dCTP deaminase.